We begin with the raw amino-acid sequence, 722 residues long: Ribosomal RNA large subunit methyltransferase K/L (722 aa).

Positions 55-167 (TGYRACLWSR…GNEGTLYLDL (113 aa)) constitute a THUMP domain.

Belongs to the methyltransferase superfamily. RlmKL family.

It localises to the cytoplasm. It catalyses the reaction guanosine(2445) in 23S rRNA + S-adenosyl-L-methionine = N(2)-methylguanosine(2445) in 23S rRNA + S-adenosyl-L-homocysteine + H(+). The catalysed reaction is guanosine(2069) in 23S rRNA + S-adenosyl-L-methionine = N(2)-methylguanosine(2069) in 23S rRNA + S-adenosyl-L-homocysteine + H(+). Specifically methylates the guanine in position 2445 (m2G2445) and the guanine in position 2069 (m7G2069) of 23S rRNA. The protein is Ribosomal RNA large subunit methyltransferase K/L of Desulfotalea psychrophila (strain LSv54 / DSM 12343).